The sequence spans 228 residues: MSGIWGWFGGGSAAQKRKDSPKNAILGLRTQLDMLQKRERHLQNQIDEQDAIARKNVSTNKTAAKQALRRKKVAESTLETTLGQITTLEQQINAIESANINRETLAAMQAAREAMGKIHGKLTPEKVDEEMAKLQEANDLSNEIATAITSANIGQPIDEGELEDELEKLQQEEVDSKLHETGGSIPVHDKISLPAAGTGALKGKEKAKAVVEDDEEEELRKLQAEMAM.

Coiled-coil stretches lie at residues 25–94 (ILGL…QINA) and 125–226 (EKVD…QAEM).

This sequence belongs to the SNF7 family. A component of the endosomal sorting required for transport complex III (ESCRT-III).

It is found in the cytoplasm. The protein localises to the endosome membrane. Functionally, required for the sorting and concentration of proteins resulting in the entry of these proteins into the invaginating vesicles of the multivesicular body (MVB). Also required for the proteolytic cleavage of the transcription factor pacc-1 in response to alkaline ambient pH. In Neurospora crassa (strain ATCC 24698 / 74-OR23-1A / CBS 708.71 / DSM 1257 / FGSC 987), this protein is Vacuolar-sorting protein snf7 (vsp-3).